The chain runs to 89 residues: UPF0297 protein lp_2275 (89 aa).

Belongs to the UPF0297 family.

The protein is UPF0297 protein lp_2275 of Lactiplantibacillus plantarum (strain ATCC BAA-793 / NCIMB 8826 / WCFS1) (Lactobacillus plantarum).